We begin with the raw amino-acid sequence, 281 residues long: Bifunctional protein FolD (281 aa).

Residues 165-167 (GRS) and Ser-190 contribute to the NADP(+) site.

It belongs to the tetrahydrofolate dehydrogenase/cyclohydrolase family. In terms of assembly, homodimer.

The enzyme catalyses (6R)-5,10-methylene-5,6,7,8-tetrahydrofolate + NADP(+) = (6R)-5,10-methenyltetrahydrofolate + NADPH. It catalyses the reaction (6R)-5,10-methenyltetrahydrofolate + H2O = (6R)-10-formyltetrahydrofolate + H(+). It functions in the pathway one-carbon metabolism; tetrahydrofolate interconversion. In terms of biological role, catalyzes the oxidation of 5,10-methylenetetrahydrofolate to 5,10-methenyltetrahydrofolate and then the hydrolysis of 5,10-methenyltetrahydrofolate to 10-formyltetrahydrofolate. This chain is Bifunctional protein FolD, found in Polaromonas sp. (strain JS666 / ATCC BAA-500).